A 428-amino-acid polypeptide reads, in one-letter code: 2,3-bisphosphoglycerate-independent phosphoglycerate mutase 2 (428 aa).

The protein belongs to the BPG-independent phosphoglycerate mutase family. A-PGAM subfamily.

It catalyses the reaction (2R)-2-phosphoglycerate = (2R)-3-phosphoglycerate. It functions in the pathway carbohydrate degradation; glycolysis; pyruvate from D-glyceraldehyde 3-phosphate: step 3/5. In terms of biological role, catalyzes the interconversion of 2-phosphoglycerate and 3-phosphoglycerate. This chain is 2,3-bisphosphoglycerate-independent phosphoglycerate mutase 2 (apgM2), found in Methanocaldococcus jannaschii (strain ATCC 43067 / DSM 2661 / JAL-1 / JCM 10045 / NBRC 100440) (Methanococcus jannaschii).